A 475-amino-acid chain; its full sequence is Enolase (475 aa).

Glutamine 179 provides a ligand contact to (2R)-2-phosphoglycerate. Glutamate 221 acts as the Proton donor in catalysis. 3 residues coordinate Mg(2+): aspartate 258, glutamate 312, and aspartate 339. (2R)-2-phosphoglycerate contacts are provided by lysine 364, arginine 393, serine 394, and lysine 415. Catalysis depends on lysine 364, which acts as the Proton acceptor. The disordered stretch occupies residues 454–475; it reads STPAATPKKSPAKKTTKAKSKK. Basic residues predominate over residues 463–475; sequence SPAKKTTKAKSKK.

It belongs to the enolase family. It depends on Mg(2+) as a cofactor.

It is found in the cell membrane. The protein resides in the cytoplasm. The protein localises to the secreted. Its subcellular location is the cell surface. The enzyme catalyses (2R)-2-phosphoglycerate = phosphoenolpyruvate + H2O. The protein operates within carbohydrate degradation; glycolysis; pyruvate from D-glyceraldehyde 3-phosphate: step 4/5. Functionally, catalyzes the reversible conversion of 2-phosphoglycerate (2-PG) into phosphoenolpyruvate (PEP). It is essential for the degradation of carbohydrates via glycolysis. Its function is as follows. 'Moonlights' as a plasminogen receptor. Binds host (chicken) plasminogen; enolase antiserum inhibits M.gallisepticum adherence to chicken embryo fibroblasts. In Mycoplasmoides gallisepticum (strain R(low / passage 15 / clone 2)) (Mycoplasma gallisepticum), this protein is Enolase.